We begin with the raw amino-acid sequence, 215 residues long: Small ribosomal subunit protein uS5 (215 aa).

A disordered region spans residues 1-62; the sequence is MTDSSPQSNP…QERDSEWQER (62 aa). Residues 9–28 show a composition bias toward low complexity; that stretch reads NPNAVPGAADVPAAAEGQQQ. Residues 29–61 show a composition bias toward basic and acidic residues; the sequence is EQRRGGGRGERGDRRGGRRGDRRNQERDSEWQE. Positions 59–122 constitute an S5 DRBM domain; it reads WQERVVQIRR…ADGKKHLVKV (64 aa).

Belongs to the universal ribosomal protein uS5 family. In terms of assembly, part of the 30S ribosomal subunit. Contacts proteins S4 and S8.

With S4 and S12 plays an important role in translational accuracy. Its function is as follows. Located at the back of the 30S subunit body where it stabilizes the conformation of the head with respect to the body. This chain is Small ribosomal subunit protein uS5, found in Parasynechococcus marenigrum (strain WH8102).